The following is a 393-amino-acid chain: S-adenosylmethionine sensor upstream of mTORC1 (393 aa).

The segment at 1 to 35 (MDLRSSAETDPDLSENHPGSVPAELQSRKQEQEKL) is disordered. R94 contributes to the S-adenosyl-L-methionine binding site. Positions 118-141 (DEKSARHATAGNANTDTNAPPQLS) are disordered. The segment covering 125–136 (ATAGNANTDTNA) has biased composition (low complexity). 5 residues coordinate S-adenosyl-L-methionine: G160, D178, D190, F191, and S232. The segment at 362–393 (ELPETPYDSDSGESQSSSAPFYELEDPILLQS) is disordered.

This sequence belongs to the BMT2/SAMTOR family. In terms of assembly, interacts with the GATOR1 complex; interaction is disrupted when samtor binds S-adenosyl-L-methionine. Interacts with the KICSTOR complex; interaction is disrupted when bmt2/samtor binds S-adenosyl-L-methionine.

Its function is as follows. S-adenosyl-L-methionine-binding protein that acts as an inhibitor of mTORC1 signaling via interaction with the GATOR1 and KICSTOR complexes. Acts as a sensor of S-adenosyl-L-methionine to signal methionine sufficiency to mTORC1: in presence of methionine, binds S-adenosyl-L-methionine, leading to disrupt interaction with the GATOR1 and KICSTOR complexes and promote mTORC1 signaling. Upon methionine starvation, S-adenosyl-L-methionine levels are reduced, thereby promoting the association with GATOR1 and KICSTOR, leading to inhibit mTORC1 signaling. Probably also acts as a S-adenosyl-L-methionine-dependent methyltransferase. The sequence is that of S-adenosylmethionine sensor upstream of mTORC1 from Danio rerio (Zebrafish).